Consider the following 593-residue polypeptide: PiggyBac transposable element-derived protein 3 (593 aa).

Disordered stretches follow at residues 27-53 (IQPP…INNL) and 69-105 (SDAE…SRRR). The span at 38–47 (SDEESGDEEG) shows a compositional bias: acidic residues. A Phosphoserine modification is found at Ser86.

As to expression, expressed in heart and oocytes, but not in granulosa cells (at protein level).

It is found in the nucleus. Functionally, binds in vitro to PGBD3-related transposable elements, called MER85s; these non-autonomous 140 bp elements are characterized by the presence of PGBD3 terminal inverted repeats and the absence of internal transposase ORF. In Homo sapiens (Human), this protein is PiggyBac transposable element-derived protein 3 (PGBD3).